We begin with the raw amino-acid sequence, 170 residues long: Single-stranded DNA-binding protein (170 aa).

Residues 1 to 26 are oligomerization; it reads MSNELKQVEQTEEAVVVSETKDYIKV.

Belongs to the phi29likevirus single-strand-binding protein family. In terms of assembly, hexamer.

In terms of biological role, single-stranded DNA-binding protein required for the elongation during viral DNA replication by strand displacement. Displaced viral DNA strands are transiently coated with the ssDNA-binding protein and therefore protected againt nucleases. The latter is then probably removed by the replisome that performs lagging strand synthesis or during the events that lead up to the recombination process. Has helix-destabilizing activity since it removes secondary structure from the ssDNA in replicative intermediates. In Bacillus subtilis (Bacteriophage GA-1), this protein is Single-stranded DNA-binding protein.